A 169-amino-acid polypeptide reads, in one-letter code: Chorion protein E1 (169 aa).

Residues 1–19 (MAWFTTVLIVASLLGSLVA) form the signal peptide. 2 Tetradecapeptide repeats span residues 114 to 127 (GAGR…KPRS) and 128 to 141 (GAGK…KPKS). Residues 119-169 (AEMEGKPRSGAGKGAEMEGKPKSTESVAETNTVAAGTGVVAEKTGTESSAS) form a disordered region. Positions 142-152 (TESVAETNTVA) are enriched in polar residues.

This protein is one of two components of the prominent 'filler' that helps mold the shape of aeropyle crowns. This is Chorion protein E1 from Antheraea polyphemus (Polyphemus moth).